The following is a 424-amino-acid chain: MASQKPHLNLITIGHVDHGKSTLVGRLLFEHGEIPAHIIEEYRKEAEQKGKATFEFAWVMDRFKEERERGVTIDLAHRKFETDKYYFTLIDAPGHRDFVKNMITGTSQADAAILVISAREGEGVMEQTREHAFLARTLGVPQIVVAINKMDATEPPFSEKRFNEVKADAEKLLKTIGYKDATFVPISGYKGDNVTKPSPNMPWYKGPSLLQALDAFKVPEKPINKPLRVPVEDVYSITGIGTVPVGRVETGVLKPGDKVIFLPADKQGDVKSIEMHHEPLQQAEPGDNIGFNVRGIAKNDIKRGDVCGHLDSPPTVVRAFTAQIVVLNHPSVIAPGYKPVFHVHTAQVACKIDEIVRTLNPKDGTTLKDKPDFIKTGDIAIVKVIPDKPLVIEKVSEIPQLGRFAVRDMGQTVAAGQCIDLEKR.

One can recognise a tr-type G domain in the interval 5–223 (KPHLNLITIG…DAFKVPEKPI (219 aa)). Positions 14 to 21 (GHVDHGKS) are G1. A GTP-binding site is contributed by 14–21 (GHVDHGKS). Serine 21 contributes to the Mg(2+) binding site. The segment at 70 to 74 (GVTID) is G2. The tract at residues 91 to 94 (DAPG) is G3. GTP-binding positions include 91–95 (DAPGH) and 148–151 (NKMD). Positions 148 to 151 (NKMD) are G4. A G5 region spans residues 187 to 189 (SGY).

It belongs to the TRAFAC class translation factor GTPase superfamily. Classic translation factor GTPase family. EF-Tu/EF-1A subfamily.

The protein resides in the cytoplasm. It carries out the reaction GTP + H2O = GDP + phosphate + H(+). GTP hydrolase that promotes the GTP-dependent binding of aminoacyl-tRNA to the A-site of ribosomes during protein biosynthesis. In Thermoplasma volcanium (strain ATCC 51530 / DSM 4299 / JCM 9571 / NBRC 15438 / GSS1), this protein is Elongation factor 1-alpha.